A 103-amino-acid polypeptide reads, in one-letter code: Defensin-like protein 289 (103 aa).

A signal peptide spans 1 to 29 (MATLKTTIFIIFILYISCTMFVNIFRVQA). Disulfide bonds link C33/C50, C39/C55, C43/C57, C72/C92, C78/C98, and C84/C100.

This sequence belongs to the DEFL family.

The protein resides in the secreted. The sequence is that of Defensin-like protein 289 from Arabidopsis thaliana (Mouse-ear cress).